The primary structure comprises 149 residues: F420H(2)-dependent quinone reductase MT1299 (149 aa).

Coenzyme F420-(gamma-Glu)n contacts are provided by residues 48-50 (AKT), 54-59 (RTTSLT), 70-73 (VASK), 81-85 (GWYHN), and Y130.

It belongs to the F420H(2)-dependent quinone reductase family.

The protein resides in the cell membrane. The enzyme catalyses oxidized coenzyme F420-(gamma-L-Glu)(n) + a quinol + H(+) = reduced coenzyme F420-(gamma-L-Glu)(n) + a quinone. Functionally, involved in a F420-dependent anti-oxidant mechanism that protects M.tuberculosis against oxidative stress and bactericidal agents. Catalyzes the F420H(2)-dependent two-electron reduction of quinones to dihydroquinones, thereby preventing the formation of cytotoxic semiquinones obtained by the one-electron reduction pathway. In vitro, catalyzes the reduction of menadione to menadiol; since menaquinone is the sole quinone electron carrier in the respiratory chain in M.tuberculosis, the physiological electron acceptor for Fqr-mediated F420H(2) oxidation is therefore likely to be the endogenous menaquinone found in the membrane fraction of M.tuberculosis. This is F420H(2)-dependent quinone reductase MT1299 from Mycobacterium tuberculosis (strain CDC 1551 / Oshkosh).